The following is a 312-amino-acid chain: Aspartate carbamoyltransferase catalytic subunit (312 aa).

Arg54 and Thr55 together coordinate carbamoyl phosphate. Lys83 contacts L-aspartate. 3 residues coordinate carbamoyl phosphate: Arg104, His132, and Gln135. L-aspartate-binding residues include Arg165 and Arg226. Carbamoyl phosphate-binding residues include Leu263 and Pro264.

The protein belongs to the aspartate/ornithine carbamoyltransferase superfamily. ATCase family. In terms of assembly, heterooligomer of catalytic and regulatory chains.

It catalyses the reaction carbamoyl phosphate + L-aspartate = N-carbamoyl-L-aspartate + phosphate + H(+). It functions in the pathway pyrimidine metabolism; UMP biosynthesis via de novo pathway; (S)-dihydroorotate from bicarbonate: step 2/3. Its function is as follows. Catalyzes the condensation of carbamoyl phosphate and aspartate to form carbamoyl aspartate and inorganic phosphate, the committed step in the de novo pyrimidine nucleotide biosynthesis pathway. The polypeptide is Aspartate carbamoyltransferase catalytic subunit (Methanothermobacter thermautotrophicus (strain ATCC 29096 / DSM 1053 / JCM 10044 / NBRC 100330 / Delta H) (Methanobacterium thermoautotrophicum)).